The sequence spans 89 residues: Small ribosomal subunit protein uS15 (89 aa).

This sequence belongs to the universal ribosomal protein uS15 family. In terms of assembly, part of the 30S ribosomal subunit. Forms a bridge to the 50S subunit in the 70S ribosome, contacting the 23S rRNA.

Its function is as follows. One of the primary rRNA binding proteins, it binds directly to 16S rRNA where it helps nucleate assembly of the platform of the 30S subunit by binding and bridging several RNA helices of the 16S rRNA. Forms an intersubunit bridge (bridge B4) with the 23S rRNA of the 50S subunit in the ribosome. This chain is Small ribosomal subunit protein uS15, found in Protochlamydia amoebophila (strain UWE25).